Here is a 684-residue protein sequence, read N- to C-terminus: Cleavage and polyadenylation specificity factor subunit 3 (684 aa).

The residue at position 2 (Ser2) is an N-acetylserine. Zn(2+)-binding residues include His71, His73, Asp75, His76, His158, and Asp179. The active-site Proton donor is the His396. His418 serves as a coordination point for Zn(2+). Residues Lys462, Lys465, and Lys545 each participate in a glycyl lysine isopeptide (Lys-Gly) (interchain with G-Cter in SUMO) cross-link. The residue at position 659 (Ser659) is a Phosphoserine. Thr681 carries the phosphothreonine modification.

Belongs to the metallo-beta-lactamase superfamily. RNA-metabolizing metallo-beta-lactamase-like family. CPSF3 subfamily. As to quaternary structure, component of the cleavage and polyadenylation specificity factor (CPSF) complex, composed of CPSF1, CPSF2, CPSF3, CPSF4 and FIP1L1. Interacts with CPSF2, CSTF2 and SYMPK. Interacts with TUT1; the interaction is direct and mediates the recruitment of the CPSF complex on the 3'UTR of pre-mRNAs. Interacts with WDR33. Interacts with ZC3H3. Zn(2+) is required as a cofactor. Sumoylated on Lys-462, Lys-465 and Lys-545, preferentially by SUMO3.

The protein resides in the nucleus. Component of the cleavage and polyadenylation specificity factor (CPSF) complex that plays a key role in pre-mRNA 3'-end formation, recognizing the AAUAAA signal sequence and interacting with poly(A) polymerase and other factors to bring about cleavage and poly(A) addition. Has endonuclease activity, and functions as an mRNA 3'-end-processing endonuclease. Also involved in the histone 3'-end pre-mRNA processing. U7 snRNP-dependent protein that induces both the 3'-endoribonucleolytic cleavage of histone pre-mRNAs and acts as a 5' to 3' exonuclease for degrading the subsequent downstream cleavage product (DCP) of mature histone mRNAs. Cleavage occurs after the 5'-ACCCA-3' sequence in the histone pre-mRNA leaving a 3'hydroxyl group on the upstream fragment containing the stem loop (SL) and 5' phosphate on the downstream cleavage product (DCP) starting with CU nucleotides. The U7-dependent 5' to 3' exonuclease activity is processive and degrades the DCP RNA substrate even after complete removal of the U7-binding site. Binds to the downstream cleavage product (DCP) of histone pre-mRNAs and the cleaved DCP RNA substrate in a U7 snRNP dependent manner. Required for entering/progressing through S-phase of the cell cycle. Required for the selective processing of microRNAs (miRNAs) during embryonic stem cell differentiation via its interaction with ISY1. Required for the biogenesis of all miRNAs from the pri-miR-17-92 primary transcript except miR-92a. Only required for the biogenesis of miR-290 and miR-96 from the pri-miR-290-295 and pri-miR-96-183 primary transcripts, respectively. The sequence is that of Cleavage and polyadenylation specificity factor subunit 3 (CPSF3) from Bos taurus (Bovine).